We begin with the raw amino-acid sequence, 483 residues long: Probable ATP-dependent RNA helicase DDX6 (483 aa).

The tract at residues 1 to 40 (MSTARTENPVIMGLSSQNGQLRGPVKPTGGPGGGGTQTQQ) is disordered. Phosphothreonine is present on threonine 36. Positions 96–124 (NEFEDYCLKRELLMGIFEMGWEKPSPIQE) match the Q motif motif. One can recognise a Helicase ATP-binding domain in the interval 127 to 298 (IPIALSGRDI…NSHLQKPYEI (172 aa)). 140–147 (AKNGTGKS) contributes to the ATP binding site. The DEAD box motif lies at 246–249 (DEAD). One can recognise a Helicase C-terminal domain in the interval 308-468 (GVTQYYAYVT…PIPSNIDKSL (161 aa)).

Belongs to the DEAD box helicase family. DDX6/DHH1 subfamily. In terms of assembly, interacts with LSM14A, LSM14B, EIF4ENIF1/4E-T, PATL1, EDC3 and EDC4. Forms a complex with DCP1A, DCP2, EDC3 and EDC4/HEDLS. Interacts with LIMD1, WTIP and AJUBA. Interacts with APOBEC3G in an RNA-dependent manner. Interacts with RC3H1. Interacts with ATXN2L. Interacts with MCRIP1. Interacts with MCRIP2. Interacts with NUFIP2. Interacts with TRIM71 (via NHL repeats) in an RNA-dependent manner. Post-translationally, sumoylated.

It localises to the cytoplasm. The protein resides in the P-body. The protein localises to the nucleus. Its subcellular location is the cytoplasmic ribonucleoprotein granule. It catalyses the reaction ATP + H2O = ADP + phosphate + H(+). Functionally, essential for the formation of P-bodies, cytosolic membrane-less ribonucleoprotein granules involved in RNA metabolism through the coordinated storage of mRNAs encoding regulatory functions. Plays a role in P-bodies to coordinate the storage of translationally inactive mRNAs in the cytoplasm and prevent their degradation. In the process of mRNA degradation, plays a role in mRNA decapping. Blocks autophagy in nutrient-rich conditions by repressing the expression of ATG-related genes through degradation of their transcripts. This Pongo abelii (Sumatran orangutan) protein is Probable ATP-dependent RNA helicase DDX6 (DDX6).